We begin with the raw amino-acid sequence, 1081 residues long: MAAFDNPVFNKTLTPVAGAGPNFRATYYTSVTEFTHVCPRSLIDGERLGTSVGKVADPPRFTVDDRTVDMFSHDHGAWPMRMEHWPGTSAERRRDKNALRFHEFHVYDIIEAHETAQSCSAWLHPRFMETLRPSGTVVTLLGMSACGKRVAVHVYGQQPYFYAKKSEIDASIGISTPGELAHAMAASLRSAASRRSTFVEATAESFVIDVVQRRDIYYYESREEEYYRVKSCSAKYISFLCDNFCRGVKKYEGGIDATTRFAVDNELFTFGWYRFKPCAGAIQIRDVTRHSTSANVEVNCTVENLEVIRGRADWPDYKLLSFDIECKAGGANDLAFPTAERIEDVVIQISAVVSSLLTRRVEHEILFSLGTCQLPEDIADHVKVCECGSEFELLLCFMTFLKQFSPEFVTGYNILGFDWGFMYNKMVNIYGMRLDGYGKANAWGTFKVQDMPHSGRGKFRNVKINGIVNFDMFSIIYQKIKLCSYKLNSVAETVLGEKKHDLSYKDLPRLFALGPEERGKIGAYCLQDSRLATKLFFKLVPHMELSAVAQLACITLTRAVFDGQQVRVFTCLLQRARKIGVVLPEKSDRFTFSAHAAGDQDDGGRSVGYQGAKVLDPDVGFHVNPVMVFDFASLYPSIIQSNNLCYSTMTHNPAAIAHLEEGTDYLRVEVQGRVFFFVREHVRRSLLAELLTDWLNMRKALRAQIPLAATEDEKVLLDMQQIAIKVICNSVYGFTGVMNGMLPCLEVAATVTAIGRDMLLKTKQYIEENWREYSNIRERFFPAMAHEGVPQYSVAVIYGDTDSVFVSFKGVPVACLVASGDAMAAEITNALFRRPVKLECEKVFTKLLMIAKKKYIGVIHTGKMMMRGVDMVRKSNCRFVNDTAKALLNLVFYDEDVATAAASSALVDVSALPRGLSKLGARVREAHAALSSPALDVRDFVMTSELSKAPKYYASSKLAHLTVYRKKIARNEEPPQVKDRIEYVIIAPGQRIQGDPFREKETDLVSSLAEDPNWVTAHKLRLNADYYFSALLQTLSVTFNAVFGDAKTAHIVMRSFIPDTLRYPAAVRKILAENTKTLTPM.

The protein belongs to the DNA polymerase type-B family. In terms of assembly, forms a complex with the ssDNA-binding protein UL29, the DNA polymerase processivity factor, and the alkaline exonuclease. Interacts with the putative helicase-primase complex subunit UL8; this interaction may coordinate leading and lagging strand DNA synthesis at the replication fork.

It localises to the host nucleus. It catalyses the reaction DNA(n) + a 2'-deoxyribonucleoside 5'-triphosphate = DNA(n+1) + diphosphate. The catalysed reaction is Endonucleolytic cleavage to 5'-phosphomonoester.. Replicates viral genomic DNA. The replication complex is composed of six viral proteins: the DNA polymerase, processivity factor, primase, primase-associated factor, helicase, and ssDNA-binding protein. Additionally, the polymerase contains an intrinsic ribonuclease H (RNase H) activity that specifically degrades RNA/DNA heteroduplexes or duplex DNA substrates in the 5' to 3' direction. Therefore, it can catalyze the excision of the RNA primers that initiate the synthesis of Okazaki fragments at a replication fork during viral DNA replication. This is DNA polymerase catalytic subunit (UL30) from Psittacid herpesvirus 1 (isolate Amazon parrot/-/97-0001/1997) (PsHV-1).